The chain runs to 394 residues: Phosphoglycerate kinase (394 aa).

Substrate contacts are provided by residues 21–23 (DFN), Arg36, 59–62 (HLGR), Arg118, and Arg151. Residue Ser183 is modified to Phosphoserine. Positions 201 and 292 each coordinate ATP. A Phosphothreonine modification is found at Thr299. ATP-binding positions include Glu323 and 350–353 (GGDS).

It belongs to the phosphoglycerate kinase family. As to quaternary structure, monomer.

Its subcellular location is the cytoplasm. It carries out the reaction (2R)-3-phosphoglycerate + ATP = (2R)-3-phospho-glyceroyl phosphate + ADP. It participates in carbohydrate degradation; glycolysis; pyruvate from D-glyceraldehyde 3-phosphate: step 2/5. The chain is Phosphoglycerate kinase from Bacillus cereus (strain ZK / E33L).